The sequence spans 215 residues: Thymidylate kinase (215 aa).

7 to 14 (GLDGSGKT) lines the ATP pocket.

Belongs to the thymidylate kinase family.

It carries out the reaction dTMP + ATP = dTDP + ADP. In terms of biological role, phosphorylation of dTMP to form dTDP in both de novo and salvage pathways of dTTP synthesis. The protein is Thymidylate kinase of Mycoplasmopsis agalactiae (strain NCTC 10123 / CIP 59.7 / PG2) (Mycoplasma agalactiae).